Consider the following 134-residue polypeptide: D-ribose pyranase (134 aa).

The Proton donor role is filled by His20. Substrate contacts are provided by residues Asp28, His101, and 123–125 (YSN).

The protein belongs to the RbsD / FucU family. RbsD subfamily. Homodecamer.

The protein localises to the cytoplasm. It carries out the reaction beta-D-ribopyranose = beta-D-ribofuranose. It participates in carbohydrate metabolism; D-ribose degradation; D-ribose 5-phosphate from beta-D-ribopyranose: step 1/2. Catalyzes the interconversion of beta-pyran and beta-furan forms of D-ribose. The chain is D-ribose pyranase from Pseudomonas syringae pv. syringae (strain B728a).